Here is a 248-residue protein sequence, read N- to C-terminus: Cytochrome c oxidase subunit 2 (248 aa).

The first 12 residues, 1 to 12, serve as a signal peptide directing secretion; it reads MLLMNLFTIINN. Over 13–39 the chain is Mitochondrial intermembrane; that stretch reads DVPTPYNMYFQDSTTPHQEGILELHDN. Residues 40 to 61 form a helical membrane-spanning segment; it reads IMFYMLTVLGLVSWMMIIIIKD. Residues 62 to 79 are Mitochondrial matrix-facing; it reads YKNNPITYKYIKHGQMIE. The chain crosses the membrane as a helical span at residues 80-104; that stretch reads IIWTILPAIILLMIAFPSFILLYLC. Residues 105-248 are Mitochondrial intermembrane-facing; the sequence is DEVISPAMTI…PTFLTWLNEQ (144 aa). Cu cation contacts are provided by histidine 183, cysteine 218, glutamate 220, cysteine 222, histidine 226, and methionine 229. Residue glutamate 220 participates in Mg(2+) binding.

The protein belongs to the cytochrome c oxidase subunit 2 family. Component of the cytochrome c oxidase (complex IV, CIV), a multisubunit enzyme composed of a catalytic core of 3 subunits and several supernumerary subunits. The complex exists as a monomer or a dimer and forms supercomplexes (SCs) in the inner mitochondrial membrane with ubiquinol-cytochrome c oxidoreductase (cytochrome b-c1 complex, complex III, CIII). Cu cation serves as cofactor. The signal sequence of COX2 is processed by IMP1.

The protein resides in the mitochondrion inner membrane. The catalysed reaction is 4 Fe(II)-[cytochrome c] + O2 + 8 H(+)(in) = 4 Fe(III)-[cytochrome c] + 2 H2O + 4 H(+)(out). In terms of biological role, component of the cytochrome c oxidase, the last enzyme in the mitochondrial electron transport chain which drives oxidative phosphorylation. The respiratory chain contains 3 multisubunit complexes succinate dehydrogenase (complex II, CII), ubiquinol-cytochrome c oxidoreductase (cytochrome b-c1 complex, complex III, CIII) and cytochrome c oxidase (complex IV, CIV), that cooperate to transfer electrons derived from NADH and succinate to molecular oxygen, creating an electrochemical gradient over the inner membrane that drives transmembrane transport and the ATP synthase. Cytochrome c oxidase is the component of the respiratory chain that catalyzes the reduction of oxygen to water. Electrons originating from reduced cytochrome c in the intermembrane space (IMS) are transferred via the dinuclear copper A center (CU(A)) of subunit 2 and heme A of subunit 1 to the active site in subunit 1, a binuclear center (BNC) formed by heme A3 and copper B (CU(B)). The BNC reduces molecular oxygen to 2 water molecules using 4 electrons from cytochrome c in the IMS and 4 protons from the mitochondrial matrix. This Eremothecium gossypii (strain ATCC 10895 / CBS 109.51 / FGSC 9923 / NRRL Y-1056) (Yeast) protein is Cytochrome c oxidase subunit 2 (COX2).